Consider the following 159-residue polypeptide: Phosphopantetheine adenylyltransferase (159 aa).

Serine 9 provides a ligand contact to substrate. ATP-binding positions include 9–10 (SF) and histidine 17. Residues lysine 41, leucine 73, and arginine 87 each contribute to the substrate site. ATP-binding positions include 88 to 90 (GLR), glutamate 98, and 123 to 129 (YSYVSSS).

This sequence belongs to the bacterial CoaD family. In terms of assembly, homohexamer. Mg(2+) is required as a cofactor.

It localises to the cytoplasm. The catalysed reaction is (R)-4'-phosphopantetheine + ATP + H(+) = 3'-dephospho-CoA + diphosphate. It participates in cofactor biosynthesis; coenzyme A biosynthesis; CoA from (R)-pantothenate: step 4/5. Its function is as follows. Reversibly transfers an adenylyl group from ATP to 4'-phosphopantetheine, yielding dephospho-CoA (dPCoA) and pyrophosphate. The chain is Phosphopantetheine adenylyltransferase from Shouchella clausii (strain KSM-K16) (Alkalihalobacillus clausii).